The sequence spans 496 residues: Pre-glycoprotein polyprotein GP complex (496 aa).

Gly-2 is lipidated: N-myristoyl glycine; by host. The Extracellular segment spans residues 2 to 17 (GQLISFFQEIPVFLQE). The chain crosses the membrane as a helical span at residues 18–32 (ALNIALVAVSLIAVI). Position 33 (Lys-33) is a topological domain, cytoplasmic. The chain crosses the membrane as a helical span at residues 34–53 (GIINLYKSGLFQFIFFLLLA). 2 consecutive stretches face the extracellular side: residues 54–58 (GRSCS) and 59–435 (DGTF…TLVD). Residue Cys-57 coordinates Zn(2+). Residues Asn-83, Asn-95, Asn-137, Asn-166, and Asn-178 are each glycosylated (N-linked (GlcNAc...) asparagine; by host). 6 cysteine pairs are disulfide-bonded: Cys-92-Cys-237, Cys-135-Cys-164, Cys-207-Cys-213, Cys-282-Cys-295, Cys-304-Cys-313, and Cys-367-Cys-388. N-linked (GlcNAc...) asparagine; by host glycosylation is found at Asn-368, Asn-376, Asn-393, and Asn-398. Residues 436-456 (ICFWSTVFFTASLFLHLVGIP) form a helical membrane-spanning segment. Residues 457–496 (THRHLKGEACPLPHKLDSFGGCRCGKYPRLRKPTIWHKRH) lie on the Cytoplasmic side of the membrane. Zn(2+) contacts are provided by His-458, His-460, Cys-466, His-470, Cys-478, Cys-480, and His-496.

This sequence belongs to the arenaviridae GPC protein family. In terms of assembly, homotetramer; disulfide-linked. Interacts with host TFRC. As to quaternary structure, homotetramer. GP2 homotetramers bind through ionic interactions with GP1 homotetramers to form the GP complex together with the stable signal peptide. The GP-C polyprotein interacts with the host protease MBTPS1/SKI-1 resulting in the polyprotein processing. Post-translationally, specific enzymatic cleavages in vivo yield mature proteins. GP-C polyprotein is cleaved in the endoplasmic reticulum by the host protease MBTPS1. Only cleaved glycoprotein is incorporated into virions. The SSP remains stably associated with the GP complex following cleavage by signal peptidase and plays crucial roles in the trafficking of GP through the secretory pathway. In terms of processing, myristoylation is necessary for GP2-mediated fusion activity.

It is found in the virion membrane. Its subcellular location is the host endoplasmic reticulum membrane. It localises to the host Golgi apparatus membrane. The protein resides in the host cell membrane. Its function is as follows. Class I viral fusion protein that directs fusion of viral and host endosomal membranes, leading to delivery of the nucleocapsid into the cytoplasm. Membrane fusion is mediated by irreversible conformational changes induced upon acidification in the endosome. Functionally, stable signal peptide (SSP): cleaved and functions as a signal peptide. In addition, it is also retained as the third component of the GP complex. The SSP is required for efficient glycoprotein expression, post-translational maturation cleavage of GP1 and GP2, glycoprotein transport to the cell surface plasma membrane, formation of infectious virus particles, and acid pH-dependent glycoprotein-mediated cell fusion. Interacts with the host receptor. Mediates virus attachment to host TFRC. This attachment induces virion internalization predominantly through clathrin-mediated endocytosis. This Machupo virus (MACV) protein is Pre-glycoprotein polyprotein GP complex.